Consider the following 415-residue polypeptide: Calcium/calmodulin-dependent serine/threonine-protein kinase (415 aa).

The region spanning 12 to 308 is the Protein kinase domain; it reads YEISEILGRG…AQELLDHPWV (297 aa). ATP is bound by residues 18–26 and lysine 46; that span reads LGRGGFSVV. The active-site Proton acceptor is aspartate 173. The calmodulin-binding stretch occupies residues 318–328; it reads MDAEIVSRLQS.

It belongs to the protein kinase superfamily. CAMK Ser/Thr protein kinase family. CaMK subfamily.

It catalyses the reaction L-seryl-[protein] + ATP = O-phospho-L-seryl-[protein] + ADP + H(+). The enzyme catalyses L-threonyl-[protein] + ATP = O-phospho-L-threonyl-[protein] + ADP + H(+). May be involved in signal transduction processes. This chain is Calcium/calmodulin-dependent serine/threonine-protein kinase, found in Malus domestica (Apple).